The following is a 280-amino-acid chain: Release factor glutamine methyltransferase (280 aa).

S-adenosyl-L-methionine contacts are provided by residues 120–124 (GTGSG), Asp-143, and Asn-186. Residue 186-189 (NPPY) coordinates substrate.

Belongs to the protein N5-glutamine methyltransferase family. PrmC subfamily.

The catalysed reaction is L-glutaminyl-[peptide chain release factor] + S-adenosyl-L-methionine = N(5)-methyl-L-glutaminyl-[peptide chain release factor] + S-adenosyl-L-homocysteine + H(+). Methylates the class 1 translation termination release factors RF1/PrfA and RF2/PrfB on the glutamine residue of the universally conserved GGQ motif. In Koribacter versatilis (strain Ellin345), this protein is Release factor glutamine methyltransferase.